Here is an 85-residue protein sequence, read N- to C-terminus: Granaticin polyketide synthase acyl carrier protein (85 aa).

The 79-residue stretch at 3 to 81 folds into the Carrier domain; it reads RLTLDGLRTI…VLLDLVNGAQ (79 aa). An O-(pantetheine 4'-phosphoryl)serine modification is found at Ser-41.

In terms of processing, 4'-phosphopantetheine is transferred from CoA to a specific serine of the apo-ACP-like protein.

The protein operates within antibiotic biosynthesis; granaticin biosynthesis. Its function is as follows. Acyl carrier protein. The protein is Granaticin polyketide synthase acyl carrier protein of Streptomyces violaceoruber.